The sequence spans 677 residues: Vertnin (677 aa).

2 disordered regions span residues 356–376 (GSTG…SSPE) and 458–490 (HSGS…KLSP). A compositionally biased stretch (basic and acidic residues) spans 458–472 (HSGSSEEGSDADKSQ).

This sequence belongs to the vertnin family.

It is found in the nucleus. In terms of biological role, functions as a transcriptional repressor that modulates bmp2b expression during dorsoventral patterning. This chain is Vertnin (vrtn), found in Danio rerio (Zebrafish).